A 177-amino-acid polypeptide reads, in one-letter code: Interleukin-1 receptor antagonist protein (177 aa).

An N-terminal signal peptide occupies residues 1 to 25; that stretch reads MEVCRCHHGYLISLLLFLFHSETAC. An intrachain disulfide couples C91 to C141. N109 and N114 each carry an N-linked (GlcNAc...) asparagine glycan.

This sequence belongs to the IL-1 family.

The protein resides in the secreted. Its function is as follows. Anti-inflammatory antagonist of interleukin-1 family of proinflammatory cytokines such as interleukin-1beta/IL1B and interleukin-1alpha/IL1A. Protects from immune dysregulation and uncontrolled systemic inflammation triggered by IL1 for a range of innate stimulatory agents such as pathogens. In Tursiops truncatus (Atlantic bottle-nosed dolphin), this protein is Interleukin-1 receptor antagonist protein (IL1RN).